Consider the following 40-residue polypeptide: U2-ctenitoxin-Pr1a (40 aa).

Cystine bridges form between Cys2-Cys17, Cys9-Cys22, Cys16-Cys32, and Cys24-Cys30.

Expressed by the venom gland.

It localises to the secreted. Neurotoxin. This chain is U2-ctenitoxin-Pr1a, found in Phoneutria reidyi (Brazilian Amazonian armed spider).